Reading from the N-terminus, the 687-residue chain is MKDAKADTKEKLNQPATGTPAATGPVKGGLNGKVPTSPAKQKAYNGDVRKDKVLVLLVEYADFKHNNIDKEPGYMYSEDFNKEHYEKMLYGDEPFALEDGSKIETFKQYYEEQSGGSYTVDGTVTKWLTVPGKAADYGADAATGHDNKGPKGPRDLVKDALKAAVDSGLDLSQFDQFDQYDVNGDGNQNQPDGLIDHLMIIHAGVGQEAGGGKLGDDAIWSHRWTVGPKPFAIEGTQAKVPYWGGKMAAFDYTIEPEDGAVGVNAHEYGHDLGLPDEYDTDYTGHGEPIQAWSVMSGGTWAGKIAGTTPTSFSPQNKEFFQKTIGGNWANIVEVDYEKLNKGIGLATYLDQSVTKSNRPGMIRVNLPDKDVKTIRPAFGKQYYYSTKGDNLHTTLETPLFDLTNATNAKFDFKSLYEIEAEYDFLEVHAVTEDGQKTLIERLGEKANSGNAEATNGKWIDKSYDLSQFKGKKVKLTFEYITDGGLALNGGLLDNASLTVDGKVTFSDDAEGTPQLKLDGFVVSSGTEKKKHNYYVEWRNHTGSDSALKFARGPEYNSGMVVWYADSAYADNWVGLHPGHGFLGVVDSHPEAIVGTLNGKPTIDSSTRFQIADAAFSFDKTPAWKVVSPTRGTYTYDGLAGVAKFDDSKTYINQQIPDAGRILPKLGLKFEVVGQADDNSAGAVRLYR.

The segment covering 1-12 (MKDAKADTKEKL) has biased composition (basic and acidic residues). A signal peptide (or 32) is located at residues 1-25 (MKDAKADTKEKLNQPATGTPAATGP). Residues 1 to 43 (MKDAKADTKEKLNQPATGTPAATGPVKGGLNGKVPTSPAKQKA) form a disordered region. The propeptide occupies 26–40 (VKGGLNGKVPTSPAK). Position 266 (His266) interacts with Zn(2+). Residue Glu267 is part of the active site. Residue His270 coordinates Zn(2+).

The protein belongs to the peptidase M6 family. The cofactor is Zn(2+). Ca(2+) serves as cofactor.

The protein localises to the secreted. Neutral metalloprotease that is secreted to degrade antibacterial proteins produced by the insect host for its defense (attacins and cecropins). Probably degrades some unknown crucial protein(s) too, since it is toxic when injected to insect larvae. In Bacillus thuringiensis subsp. alesti, this protein is Immune inhibitor A (ina).